We begin with the raw amino-acid sequence, 533 residues long: D-3-phosphoglycerate dehydrogenase (533 aa).

An N-acetylalanine modification is found at Ala-2. At Ser-14 the chain carries Phosphoserine. Position 21 is an N6-acetyllysine; alternate (Lys-21). Residue Lys-21 forms a Glycyl lysine isopeptide (Lys-Gly) (interchain with G-Cter in SUMO1); alternate linkage. Residue Lys-21 forms a Glycyl lysine isopeptide (Lys-Gly) (interchain with G-Cter in SUMO2); alternate linkage. Lys-58 carries the post-translational modification N6-acetyllysine. NAD(+)-binding positions include Thr-78, 155-156 (RI), Asp-175, Thr-207, 234-236 (CAR), and Asp-260. Thr-78 is modified (phosphothreonine). Arg-236 is an active-site residue. Glu-265 is a catalytic residue. Residue His-283 is the Proton donor of the active site. NAD(+) is bound at residue 283-286 (HLGA).

This sequence belongs to the D-isomer specific 2-hydroxyacid dehydrogenase family. Homotetramer.

It catalyses the reaction (2R)-3-phosphoglycerate + NAD(+) = 3-phosphooxypyruvate + NADH + H(+). The catalysed reaction is (R)-2-hydroxyglutarate + NAD(+) = 2-oxoglutarate + NADH + H(+). It carries out the reaction (S)-malate + NAD(+) = oxaloacetate + NADH + H(+). It participates in amino-acid biosynthesis; L-serine biosynthesis; L-serine from 3-phospho-D-glycerate: step 1/3. Catalyzes the reversible oxidation of 3-phospho-D-glycerate to 3-phosphonooxypyruvate, the first step of the phosphorylated L-serine biosynthesis pathway. Also catalyzes the reversible oxidation of 2-hydroxyglutarate to 2-oxoglutarate and the reversible oxidation of (S)-malate to oxaloacetate. The chain is D-3-phosphoglycerate dehydrogenase (PHGDH) from Pan troglodytes (Chimpanzee).